Here is a 592-residue protein sequence, read N- to C-terminus: Protein US23 (592 aa).

The disordered stretch occupies residues 407 to 491; it reads PRSLGDGEEE…NNVVPNVDRR (85 aa). Residues 460-481 show a composition bias toward acidic residues; sequence ADDEEQGEDDDDSGAEPMEPEE.

This sequence belongs to the herpesviridae US22 family.

Its subcellular location is the virion tegument. This is Protein US23 (US23) from Homo sapiens (Human).